Here is a 279-residue protein sequence, read N- to C-terminus: Shikimate dehydrogenase (NADP(+)) (279 aa).

Residues 14–16 and threonine 63 contribute to the shikimate site; that span reads SIS. Lysine 67 functions as the Proton acceptor in the catalytic mechanism. An NADP(+)-binding site is contributed by glutamate 79. Shikimate contacts are provided by asparagine 88 and aspartate 103. Residues 127 to 131, 151 to 156, and methionine 219 each bind NADP(+); these read GAGGA and NRTYEK. Residue tyrosine 221 coordinates shikimate. Glycine 242 provides a ligand contact to NADP(+).

The protein belongs to the shikimate dehydrogenase family. As to quaternary structure, homodimer.

It carries out the reaction shikimate + NADP(+) = 3-dehydroshikimate + NADPH + H(+). The protein operates within metabolic intermediate biosynthesis; chorismate biosynthesis; chorismate from D-erythrose 4-phosphate and phosphoenolpyruvate: step 4/7. Functionally, involved in the biosynthesis of the chorismate, which leads to the biosynthesis of aromatic amino acids. Catalyzes the reversible NADPH linked reduction of 3-dehydroshikimate (DHSA) to yield shikimate (SA). This is Shikimate dehydrogenase (NADP(+)) from Caldicellulosiruptor saccharolyticus (strain ATCC 43494 / DSM 8903 / Tp8T 6331).